A 339-amino-acid chain; its full sequence is Erlin-2 (339 aa).

Topologically, residues 1-3 (MAQ) are cytoplasmic. A helical transmembrane segment spans residues 4–24 (LGAVVAVASSFFCASLFSAVH). Topologically, residues 25-339 (KIEEGHIGVY…EPLETATKDN (315 aa)) are extracellular. A glycan (N-linked (GlcNAc...) asparagine) is linked at N106. Positions 177-309 (EAIRRNYELM…DIPNMFMDSA (133 aa)) are interaction with ERLIN1. At K267 the chain carries N6-acetyllysine.

It belongs to the band 7/mec-2 family. Forms a heteromeric complex with ERLIN1. In complex with ERLIN1, interacts with RNF170. Interacts with activated ITPR1, independently of the degree of ITPR1 polyubiquitination. Interacts with SCAP, INSIG1, SREBF1 and SREBF2 under cholesterol sufficiency conditions; indicative for an association with the SCAP-SREBP-INSIG complex. Probably part of an AMFR/gp78 and INSIG1-containing ubiquitin ligase complex involved in ERAD of HMGCR. Interacts with TMUB1; TMUB1 bridges the association with AMFR. Interacts with SYVN1 and RNF139. Interacts with TMEM259. Interacts with TMEM41B. In terms of processing, deubiquitinated by USP25; leading to stabilization.

Its subcellular location is the endoplasmic reticulum membrane. Component of the ERLIN1/ERLIN2 complex which mediates the endoplasmic reticulum-associated degradation (ERAD) of inositol 1,4,5-trisphosphate receptors (IP3Rs) such as ITPR1. Promotes sterol-accelerated ERAD of HMGCR probably implicating an AMFR/gp78-containing ubiquitin ligase complex. Involved in regulation of cellular cholesterol homeostasis by regulation the SREBP signaling pathway. May promote ER retention of the SCAP-SREBF complex. In Rattus norvegicus (Rat), this protein is Erlin-2.